We begin with the raw amino-acid sequence, 170 residues long: Cyclic pyranopterin monophosphate synthase (170 aa).

The segment at 1–25 (MADPSTLTHPDPEGGVRMMDASQKS) is disordered. Substrate contacts are provided by residues 78 to 80 (LCH) and 116 to 117 (ME). D131 is an active-site residue.

It belongs to the MoaC family. In terms of assembly, homohexamer; trimer of dimers.

It carries out the reaction (8S)-3',8-cyclo-7,8-dihydroguanosine 5'-triphosphate = cyclic pyranopterin phosphate + diphosphate. It participates in cofactor biosynthesis; molybdopterin biosynthesis. Catalyzes the conversion of (8S)-3',8-cyclo-7,8-dihydroguanosine 5'-triphosphate to cyclic pyranopterin monophosphate (cPMP). The protein is Cyclic pyranopterin monophosphate synthase of Salinibacter ruber (strain DSM 13855 / M31).